The sequence spans 409 residues: S-adenosylmethionine synthase (409 aa).

141-146 (GQGSAD) is an ATP binding site.

It belongs to the AdoMet synthase 2 family. Mg(2+) serves as cofactor.

It carries out the reaction L-methionine + ATP + H2O = S-adenosyl-L-methionine + phosphate + diphosphate. The protein operates within amino-acid biosynthesis; S-adenosyl-L-methionine biosynthesis; S-adenosyl-L-methionine from L-methionine: step 1/1. In terms of biological role, catalyzes the formation of S-adenosylmethionine from methionine and ATP. The sequence is that of S-adenosylmethionine synthase from Hyperthermus butylicus (strain DSM 5456 / JCM 9403 / PLM1-5).